The chain runs to 486 residues: Aspartyl/glutamyl-tRNA(Asn/Gln) amidotransferase subunit B (486 aa).

It belongs to the GatB/GatE family. GatB subfamily. In terms of assembly, heterotrimer of A, B and C subunits.

It catalyses the reaction L-glutamyl-tRNA(Gln) + L-glutamine + ATP + H2O = L-glutaminyl-tRNA(Gln) + L-glutamate + ADP + phosphate + H(+). The enzyme catalyses L-aspartyl-tRNA(Asn) + L-glutamine + ATP + H2O = L-asparaginyl-tRNA(Asn) + L-glutamate + ADP + phosphate + 2 H(+). Allows the formation of correctly charged Asn-tRNA(Asn) or Gln-tRNA(Gln) through the transamidation of misacylated Asp-tRNA(Asn) or Glu-tRNA(Gln) in organisms which lack either or both of asparaginyl-tRNA or glutaminyl-tRNA synthetases. The reaction takes place in the presence of glutamine and ATP through an activated phospho-Asp-tRNA(Asn) or phospho-Glu-tRNA(Gln). The protein is Aspartyl/glutamyl-tRNA(Asn/Gln) amidotransferase subunit B of Leptospira interrogans serogroup Icterohaemorrhagiae serovar Lai (strain 56601).